Consider the following 65-residue polypeptide: Alpha-toxin Bot11 (65 aa).

The region spanning 2 to 64 is the LCN-type CS-alpha/beta domain; sequence KDGYIVDDRN…VRTVQAGRCR (63 aa). Intrachain disulfides connect Cys-12/Cys-63, Cys-16/Cys-36, Cys-22/Cys-46, and Cys-26/Cys-48.

It belongs to the long (4 C-C) scorpion toxin superfamily. Sodium channel inhibitor family. Alpha subfamily. In terms of tissue distribution, expressed by the venom gland.

Its subcellular location is the secreted. Functionally, alpha toxins bind voltage-independently at site-3 of sodium channels (Nav) and inhibit the inactivation of the activated channels, thereby blocking neuronal transmission. The sequence is that of Alpha-toxin Bot11 from Buthus occitanus tunetanus (Common European scorpion).